The chain runs to 320 residues: Ino eighty subunit 2 (320 aa).

2 stretches are compositionally biased toward acidic residues: residues 1–12 and 22–35; these read MDSEASDIEAEL and EYID…DIDD. 2 disordered regions span residues 1 to 232 and 244 to 306; these read MDSE…SKKK and ENAR…EGMT. Basic residues predominate over residues 42–59; that stretch reads SSRRTARRSVPKGVRTSK. Phosphoserine is present on serine 67. Residues 68–80 are compositionally biased toward acidic residues; that stretch reads VEVDEDYDEEEDV. Basic and acidic residues predominate over residues 105–116; that stretch reads EKSDIGDSKGND. A compositionally biased stretch (acidic residues) spans 117-130; sequence GEIEDGILEEEESL. Serine 129 carries the post-translational modification Phosphoserine. The span at 131-147 shows a compositional bias: basic and acidic residues; it reads EKELNRGGGKEVEKSEE. Residues 161–174 show a composition bias toward acidic residues; it reads EEQDGESGGYEDNE. Low complexity predominate over residues 207–217; the sequence is TDSTRSTTTRS. Basic and acidic residues predominate over residues 244-264; that stretch reads ENARKRKNLSEKRLEEEKQDT. Basic residues predominate over residues 268 to 278; the sequence is LLKKRAGKSRS.

The protein belongs to the IES2 family. Component of the chromatin-remodeling INO80 complex, at least composed of ARP4, ARP5, ARP8, RVB1, RVB2, TAF14, NHP10, IES1, IES3, IES4, IES6, ACT1, IES2, IES5 and INO80.

Its subcellular location is the nucleus. In terms of biological role, component of the INO80 complex which remodels chromatin by shifting nucleosomes and is involved in DNA repair. This is Ino eighty subunit 2 (IES2) from Saccharomyces cerevisiae (strain ATCC 204508 / S288c) (Baker's yeast).